A 438-amino-acid polypeptide reads, in one-letter code: Aspartate--tRNA(Asp/Asn) ligase (438 aa).

An L-aspartate-binding site is contributed by E176. The tract at residues 198–201 (QLYK) is aspartate. R220 is an L-aspartate binding site. ATP contacts are provided by residues 220–222 (RAE), 228–230 (RHL), and E361. Mg(2+)-binding residues include E361 and S364. Residues S364 and R368 each coordinate L-aspartate. 409 to 412 (GIER) is a binding site for ATP.

This sequence belongs to the class-II aminoacyl-tRNA synthetase family. Type 2 subfamily. As to quaternary structure, homodimer. Mg(2+) is required as a cofactor.

Its subcellular location is the cytoplasm. The catalysed reaction is tRNA(Asx) + L-aspartate + ATP = L-aspartyl-tRNA(Asx) + AMP + diphosphate. In terms of biological role, aspartyl-tRNA synthetase with relaxed tRNA specificity since it is able to aspartylate not only its cognate tRNA(Asp) but also tRNA(Asn). Reaction proceeds in two steps: L-aspartate is first activated by ATP to form Asp-AMP and then transferred to the acceptor end of tRNA(Asp/Asn). This Methanococcus aeolicus (strain ATCC BAA-1280 / DSM 17508 / OCM 812 / Nankai-3) protein is Aspartate--tRNA(Asp/Asn) ligase.